The primary structure comprises 310 residues: HPr kinase/phosphorylase (310 aa).

Catalysis depends on residues histidine 138 and lysine 159. 153–160 is an ATP binding site; that stretch reads GDSGIGKS. Serine 160 provides a ligand contact to Mg(2+). Catalysis depends on aspartate 177, which acts as the Proton acceptor; for phosphorylation activity. Proton donor; for dephosphorylation activity. Positions 201 to 210 are important for the catalytic mechanism of both phosphorylation and dephosphorylation; sequence LEIRGVGIID. Residue glutamate 202 coordinates Mg(2+). The active site involves arginine 243. Residues 264-269 are important for the catalytic mechanism of dephosphorylation; that stretch reads PVKTGR.

This sequence belongs to the HPrK/P family. In terms of assembly, homohexamer. Mg(2+) is required as a cofactor.

The catalysed reaction is [HPr protein]-L-serine + ATP = [HPr protein]-O-phospho-L-serine + ADP + H(+). The enzyme catalyses [HPr protein]-O-phospho-L-serine + phosphate + H(+) = [HPr protein]-L-serine + diphosphate. Its function is as follows. Catalyzes the ATP- as well as the pyrophosphate-dependent phosphorylation of a specific serine residue in HPr, a phosphocarrier protein of the phosphoenolpyruvate-dependent sugar phosphotransferase system (PTS). HprK/P also catalyzes the pyrophosphate-producing, inorganic phosphate-dependent dephosphorylation (phosphorolysis) of seryl-phosphorylated HPr (P-Ser-HPr). The two antagonistic activities of HprK/P are regulated by several intracellular metabolites, which change their concentration in response to the absence or presence of rapidly metabolisable carbon sources (glucose, fructose, etc.) in the growth medium. Therefore, by controlling the phosphorylation state of HPr, HPrK/P is a sensor enzyme that plays a major role in the regulation of carbon metabolism and sugar transport: it mediates carbon catabolite repression (CCR), and regulates PTS-catalyzed carbohydrate uptake and inducer exclusion. The sequence is that of HPr kinase/phosphorylase from Streptococcus uberis (strain ATCC BAA-854 / 0140J).